Reading from the N-terminus, the 350-residue chain is Spermidine/putrescine import ATP-binding protein PotA (350 aa).

The ABC transporter domain maps to 6–236; the sequence is LELRNISKQY…PENLWTAQFI (231 aa). 38 to 45 serves as a coordination point for ATP; the sequence is GPSGCGKT.

This sequence belongs to the ABC transporter superfamily. Spermidine/putrescine importer (TC 3.A.1.11.1) family. In terms of assembly, the complex is composed of two ATP-binding proteins (PotA), two transmembrane proteins (PotB and PotC) and a solute-binding protein (PotD).

The protein resides in the cell membrane. The catalysed reaction is ATP + H2O + polyamine-[polyamine-binding protein]Side 1 = ADP + phosphate + polyamineSide 2 + [polyamine-binding protein]Side 1.. Functionally, part of the ABC transporter complex PotABCD involved in spermidine/putrescine import. Responsible for energy coupling to the transport system. In Spiroplasma citri, this protein is Spermidine/putrescine import ATP-binding protein PotA.